We begin with the raw amino-acid sequence, 143 residues long: Putative pre-16S rRNA nuclease (143 aa).

This sequence belongs to the YqgF nuclease family.

Its subcellular location is the cytoplasm. In terms of biological role, could be a nuclease involved in processing of the 5'-end of pre-16S rRNA. This Salinibacter ruber (strain DSM 13855 / M31) protein is Putative pre-16S rRNA nuclease.